The chain runs to 499 residues: Cytochrome P450 2M1 (499 aa).

C441 lines the heme pocket.

The protein belongs to the cytochrome P450 family. The cofactor is heme. In kidney and in liver from juvenile and sexually mature trout from both sexes.

The protein resides in the endoplasmic reticulum membrane. The protein localises to the microsome membrane. The catalysed reaction is an organic molecule + reduced [NADPH--hemoprotein reductase] + O2 = an alcohol + oxidized [NADPH--hemoprotein reductase] + H2O + H(+). Its function is as follows. Has (omega-6)-hydroxylation activity toward lauric acid. In Oncorhynchus mykiss (Rainbow trout), this protein is Cytochrome P450 2M1 (cyp2m1).